The primary structure comprises 1105 residues: Lysylphosphatidylglycerol biosynthesis bifunctional protein LysX (1105 aa).

Residues 1–603 (MTVTKPRSVQ…LLHHDGSAPD (603 aa)) are phosphatidylglycerol lysyltransferase. 7 consecutive transmembrane segments (helical) span residues 20–40 (VPAA…LASI), 62–82 (FPDT…ALAA), 86–106 (IAWL…AADI), 117–137 (FGEN…VLGY), 154–174 (AVLV…VELF), 186–203 (YVAN…DLFT), and 208–228 (VFLN…ATIV). The interval 604 to 1105 (VSGLRQSAIA…TLPFPLAKPH (502 aa)) is lysine--tRNA ligase. The Mg(2+) site is built by Asp-1017 and Glu-1024.

This sequence in the N-terminal section; belongs to the LPG synthetase family. In the C-terminal section; belongs to the class-II aminoacyl-tRNA synthetase family. Mg(2+) serves as cofactor.

It is found in the cell membrane. The catalysed reaction is tRNA(Lys) + L-lysine + ATP = L-lysyl-tRNA(Lys) + AMP + diphosphate. It catalyses the reaction L-lysyl-tRNA(Lys) + a 1,2-diacyl-sn-glycero-3-phospho-(1'-sn-glycerol) = a 1,2-diacyl-sn-glycero-3-phospho-1'-(3'-O-L-lysyl)-sn-glycerol + tRNA(Lys). Its function is as follows. Catalyzes the production of L-lysyl-tRNA(Lys)transfer and the transfer of a lysyl group from L-lysyl-tRNA(Lys) to membrane-bound phosphatidylglycerol (PG), which produces lysylphosphatidylglycerol (LPG), one of the components of the bacterial membrane with a positive net charge. LPG synthesis contributes to the resistance to cationic antimicrobial peptides (CAMPs) and likely protects M.tuberculosis against the CAMPs produced by competiting microorganisms (bacteriocins). In fact, the modification of anionic phosphatidylglycerol with positively charged L-lysine results in repulsion of the peptides. The polypeptide is Lysylphosphatidylglycerol biosynthesis bifunctional protein LysX (lysX) (Mycobacterium marinum (strain ATCC BAA-535 / M)).